The primary structure comprises 258 residues: Phosphate import ATP-binding protein PstB (258 aa).

The region spanning 5 to 247 is the ABC transporter domain; the sequence is IETKDLDIYY…ERIFSNPKEK (243 aa). 37–44 serves as a coordination point for ATP; sequence GPSGCGKS.

The protein belongs to the ABC transporter superfamily. Phosphate importer (TC 3.A.1.7) family. In terms of assembly, the complex is composed of two ATP-binding proteins (PstB), two transmembrane proteins (PstC and PstA) and a solute-binding protein (PstS).

The protein resides in the cell membrane. It carries out the reaction phosphate(out) + ATP + H2O = ADP + 2 phosphate(in) + H(+). In terms of biological role, part of the ABC transporter complex PstSACB involved in phosphate import. Responsible for energy coupling to the transport system. This is Phosphate import ATP-binding protein PstB from Cutibacterium acnes (strain DSM 16379 / KPA171202) (Propionibacterium acnes).